The sequence spans 398 residues: Acetate kinase (398 aa).

Asparagine 7 serves as a coordination point for Mg(2+). Position 14 (lysine 14) interacts with ATP. A substrate-binding site is contributed by arginine 92. Aspartate 149 (proton donor/acceptor) is an active-site residue. ATP is bound by residues 208-212 (HLGNG), 283-285 (DCR), and 331-335 (GIGEN). Glutamate 385 provides a ligand contact to Mg(2+).

Belongs to the acetokinase family. Homodimer. Mg(2+) is required as a cofactor. Mn(2+) serves as cofactor.

It is found in the cytoplasm. The catalysed reaction is acetate + ATP = acetyl phosphate + ADP. It functions in the pathway metabolic intermediate biosynthesis; acetyl-CoA biosynthesis; acetyl-CoA from acetate: step 1/2. Its function is as follows. Catalyzes the formation of acetyl phosphate from acetate and ATP. Can also catalyze the reverse reaction. In Fusobacterium nucleatum subsp. nucleatum (strain ATCC 25586 / DSM 15643 / BCRC 10681 / CIP 101130 / JCM 8532 / KCTC 2640 / LMG 13131 / VPI 4355), this protein is Acetate kinase.